The primary structure comprises 523 residues: Katanin p60 ATPase-containing subunit A1 (523 aa).

Residues 82–215 are disordered; sequence KEAPTGRRAA…DGKSKRGLYE (134 aa). The span at 178–194 shows a compositional bias: low complexity; it reads AGARSSTAGKKGAASKS. 279–286 contacts ATP; it reads GPPGTGKT.

This sequence belongs to the AAA ATPase family. Katanin p60 subunit A1 subfamily. As to quaternary structure, may homooligomerize. Component of KTN80-KTN1 complexes composed of a hexamer of KTN1-KTN80 heterodimers that sense microtubule (MT) geometry to confer precise MT severing. Interacts directly with KTN80.1, KTN80.2, KTN80.3 and KTN80.4. Can interact with KTN80.1. May interact with the kinesin related protein KIN14A. Interacts with microtubule polymers. Binds to IPGA1. Expressed ubiquitously, including siliques, flowers, leaves, stems and roots.

It is found in the cytoplasm. Its subcellular location is the cytoskeleton. It catalyses the reaction n ATP + n H2O + a microtubule = n ADP + n phosphate + (n+1) alpha/beta tubulin heterodimers.. In terms of biological role, severs microtubules in vitro in an ATP-dependent manner. Required for oligomerization of functional KTN80-KTN1 complexes that catalyze microtubule severing. This activity may promote rapid reorganization of cellular microtubule arrays. May be required for reorientation of cortical microtubule arrays during cellular elongation. Failure to correctly orient these arrays drastically compromises fiber length, cell wall thickness and mechanical strength. May also be required for the spatial organization of developmental cues within the root. Involved in the IPGA1- and AN-dependent regulation of pavement cells morphogenesis leading to puzzle shape. In Arabidopsis thaliana (Mouse-ear cress), this protein is Katanin p60 ATPase-containing subunit A1.